Consider the following 267-residue polypeptide: 3-methyl-2-oxobutanoate hydroxymethyltransferase (267 aa).

2 residues coordinate Mg(2+): D46 and D85. Residues 46–47, D85, and K115 contribute to the 3-methyl-2-oxobutanoate site; that span reads DS. E117 contributes to the Mg(2+) binding site. Catalysis depends on E184, which acts as the Proton acceptor.

The protein belongs to the PanB family. In terms of assembly, homodecamer; pentamer of dimers. It depends on Mg(2+) as a cofactor.

It is found in the cytoplasm. It catalyses the reaction 3-methyl-2-oxobutanoate + (6R)-5,10-methylene-5,6,7,8-tetrahydrofolate + H2O = 2-dehydropantoate + (6S)-5,6,7,8-tetrahydrofolate. Its pathway is cofactor biosynthesis; (R)-pantothenate biosynthesis; (R)-pantoate from 3-methyl-2-oxobutanoate: step 1/2. In terms of biological role, catalyzes the reversible reaction in which hydroxymethyl group from 5,10-methylenetetrahydrofolate is transferred onto alpha-ketoisovalerate to form ketopantoate. In Syntrophotalea carbinolica (strain DSM 2380 / NBRC 103641 / GraBd1) (Pelobacter carbinolicus), this protein is 3-methyl-2-oxobutanoate hydroxymethyltransferase.